We begin with the raw amino-acid sequence, 75 residues long: Protein RALF-like 9 (75 aa).

A signal peptide spans 1-28 (MGMSKSIKVILSLALVVFLALAATKVEA). 2 disulfide bridges follow: Cys-46–Cys-54 and Cys-66–Cys-72.

The protein belongs to the plant rapid alkalinization factor (RALF) family.

It localises to the secreted. Cell signaling peptide that may regulate plant stress, growth, and development. Mediates a rapid alkalinization of extracellular space by mediating a transient increase in the cytoplasmic Ca(2+) concentration leading to a calcium-dependent signaling events through a cell surface receptor and a concomitant activation of some intracellular mitogen-activated protein kinases. This Arabidopsis thaliana (Mouse-ear cress) protein is Protein RALF-like 9 (RALFL9).